Consider the following 67-residue polypeptide: Metallothionein-B (67 aa).

It belongs to the metallothionein superfamily. Type 4 family.

Its function is as follows. Metallothioneins have a high content of cysteine residues that bind various heavy metals. The chain is Metallothionein-B from Sphaerechinus granularis (Purple sea urchin).